Here is a 163-residue protein sequence, read N- to C-terminus: Nucleotide-binding protein PMI0103 (163 aa).

It belongs to the YajQ family.

In terms of biological role, nucleotide-binding protein. The protein is Nucleotide-binding protein PMI0103 of Proteus mirabilis (strain HI4320).